Reading from the N-terminus, the 191-residue chain is Ferric nitrobindin-like protein (191 aa).

The GXWXGXG signature appears at 20–26 (GDWAGAG).

This sequence belongs to the nitrobindin family.

In Streptomyces coelicolor (strain ATCC BAA-471 / A3(2) / M145), this protein is Ferric nitrobindin-like protein.